Here is an 874-residue protein sequence, read N- to C-terminus: Alanine--tRNA ligase (874 aa).

The Zn(2+) site is built by His562, His566, Cys665, and His669.

The protein belongs to the class-II aminoacyl-tRNA synthetase family. Requires Zn(2+) as cofactor.

It localises to the cytoplasm. It carries out the reaction tRNA(Ala) + L-alanine + ATP = L-alanyl-tRNA(Ala) + AMP + diphosphate. Catalyzes the attachment of alanine to tRNA(Ala) in a two-step reaction: alanine is first activated by ATP to form Ala-AMP and then transferred to the acceptor end of tRNA(Ala). Also edits incorrectly charged Ser-tRNA(Ala) and Gly-tRNA(Ala) via its editing domain. This Pseudomonas putida (strain ATCC 700007 / DSM 6899 / JCM 31910 / BCRC 17059 / LMG 24140 / F1) protein is Alanine--tRNA ligase.